The primary structure comprises 546 residues: Chaperonin GroEL (546 aa).

ATP is bound by residues 29-32 (TMGP), K50, 86-90 (DGTTT), G414, and D492.

It belongs to the chaperonin (HSP60) family. In terms of assembly, forms a cylinder of 14 subunits composed of two heptameric rings stacked back-to-back. Interacts with the co-chaperonin GroES.

Its subcellular location is the cytoplasm. It carries out the reaction ATP + H2O + a folded polypeptide = ADP + phosphate + an unfolded polypeptide.. Functionally, together with its co-chaperonin GroES, plays an essential role in assisting protein folding. The GroEL-GroES system forms a nano-cage that allows encapsulation of the non-native substrate proteins and provides a physical environment optimized to promote and accelerate protein folding. The sequence is that of Chaperonin GroEL from Helicobacter acinonychis (strain Sheeba).